We begin with the raw amino-acid sequence, 280 residues long: Cycloeucalenol cycloisomerase (280 aa).

Helical transmembrane passes span 22–42 (LFFL…VVPY), 53–73 (YLLL…LLVG), 89–109 (ANLW…HYFF), 167–187 (FEAA…TIAI), 201–221 (MYRV…PMFF), and 244–264 (AMLV…IVPL).

It localises to the membrane. The catalysed reaction is cycloeucalenol = obtusifoliol. Converts pentacyclic cyclopropyl sterols to tetracyclic sterols. This Arabidopsis thaliana (Mouse-ear cress) protein is Cycloeucalenol cycloisomerase (CPI1).